Reading from the N-terminus, the 407-residue chain is Putative cell wall shaping protein YabE (407 aa).

Positions 1 to 31 are cleaved as a signal peptide; it reads MKKLFSVKLSKSKVILVAACLLLAGSGTAYA. Residues 206 to 286 form the G5 domain; that stretch reads ITRIEKVTDV…DKVIAVGTKQ (81 aa).

In terms of biological role, suggested to be involved in cell wall modification. The chain is Putative cell wall shaping protein YabE (yabE) from Bacillus subtilis (strain 168).